The sequence spans 449 residues: Chlorobenzene dioxygenase subunit alpha (449 aa).

The Rieske domain occupies 54-163 (WLLLGHETQI…VATYKGLIFA (110 aa)). Residues C96, H98, C116, and H119 each contribute to the [2Fe-2S] cluster site. Fe cation is bound by residues H222, H228, and D376.

Belongs to the bacterial ring-hydroxylating dioxygenase alpha subunit family. In terms of assembly, this dioxygenase system consists of four proteins: the two subunits of the oxygenase component (TecA1 and TecA2), a ferredoxin (TecA3) and a ferredoxin reductase (TecA4). The cofactor is [2Fe-2S] cluster. Fe cation serves as cofactor.

The enzyme catalyses chlorobenzene + NADH + O2 + H(+) = (1R,2R)-3-chlorocyclohexa-3,5-diene-1,2-diol + NAD(+). It participates in aromatic compound metabolism. Its function is as follows. Part of the oxygenase component of the chlorobenzene dioxygenase system that catalyzes the dihydroxylation of a range of aromatic compounds, including chlorinated benzenes and toluenes, and dinuclear aromatics such as biphenyl and dibenzo-p-dioxin. The alpha subunit is responsible for substrate specificity. The protein is Chlorobenzene dioxygenase subunit alpha of Cupriavidus sp. (strain PS12).